Here is a 404-residue protein sequence, read N- to C-terminus: Zinc finger TRAF-type-containing protein 1 (404 aa).

The span at 1–13 shows a compositional bias: gly residues; it reads MSGAEEAGGGGPA. The tract at residues 1–22 is disordered; sequence MSGAEEAGGGGPAAGPAGSVPA. The RING-type; degenerate zinc finger occupies 111–156; that stretch reads CTVCLDLPKASVYQCTNGHLMCAGCFIHLLADARLKEEQATCPNCR. Residues 152–225 form a TRAF-type zinc finger; it reads CPNCRCEISK…PWHGPFHELT (74 aa).

It belongs to the ZFTRAF1 family. As to quaternary structure, interacts with LGALS3.

Its subcellular location is the cytoplasm. It localises to the perinuclear region. In Homo sapiens (Human), this protein is Zinc finger TRAF-type-containing protein 1.